The primary structure comprises 471 residues: Ribulose bisphosphate carboxylase large chain (471 aa).

Asn115 and Thr165 together coordinate substrate. Lys167 functions as the Proton acceptor in the catalytic mechanism. Lys169 is a substrate binding site. The Mg(2+) site is built by Lys193, Asp195, and Glu196. Position 193 is an N6-carboxylysine (Lys193). Residue His286 is the Proton acceptor of the active site. Positions 287, 319, and 371 each coordinate substrate.

It belongs to the RuBisCO large chain family. Type I subfamily. In terms of assembly, heterohexadecamer of 8 large chains and 8 small chains. The cofactor is Mg(2+).

The enzyme catalyses 2 (2R)-3-phosphoglycerate + 2 H(+) = D-ribulose 1,5-bisphosphate + CO2 + H2O. It catalyses the reaction D-ribulose 1,5-bisphosphate + O2 = 2-phosphoglycolate + (2R)-3-phosphoglycerate + 2 H(+). Functionally, ruBisCO catalyzes two reactions: the carboxylation of D-ribulose 1,5-bisphosphate, the primary event in carbon dioxide fixation, as well as the oxidative fragmentation of the pentose substrate. Both reactions occur simultaneously and in competition at the same active site. In Alvinoconcha hessleri symbiotic bacterium, this protein is Ribulose bisphosphate carboxylase large chain.